A 196-amino-acid chain; its full sequence is MSRYRGPRLKKIRRLGALPGLTRKTPKSRSNLKKKFHSGKKEQYRIRLQEKQKLRFHYGLTERQLLRYVQIAGKAKRSTGQVLLQLLEMRLDNILFRLGMASTIPGARQLVNHRHILVNGRIVNIPSFRCKPRDIITTKDNQRSKGLVQNSIASSDPGKLPKHLTIDTLEYKGLVNKILDRKWVGLKINELLVVEY.

A disordered region spans residues 17-38; that stretch reads ALPGLTRKTPKSRSNLKKKFHS. Residues 24-38 are compositionally biased toward basic residues; that stretch reads KTPKSRSNLKKKFHS. One can recognise an S4 RNA-binding domain in the interval 89 to 169; it reads MRLDNILFRL…LPKHLTIDTL (81 aa).

The protein belongs to the universal ribosomal protein uS4 family. As to quaternary structure, part of the 30S ribosomal subunit. Contacts protein S5. The interaction surface between S4 and S5 is involved in control of translational fidelity.

It is found in the plastid. It localises to the chloroplast. In terms of biological role, one of the primary rRNA binding proteins, it binds directly to 16S rRNA where it nucleates assembly of the body of the 30S subunit. Its function is as follows. With S5 and S12 plays an important role in translational accuracy. In Lygeum spartum, this protein is Small ribosomal subunit protein uS4c (rps4).